The following is a 448-amino-acid chain: UDP-N-acetylmuramoyl-L-alanine--L-glutamate ligase (448 aa).

118-124 (GSKGKST) is a binding site for ATP.

The protein belongs to the MurCDEF family. MurD2 subfamily.

The protein localises to the cytoplasm. The enzyme catalyses UDP-N-acetyl-alpha-D-muramoyl-L-alanine + L-glutamate + ATP = UDP-N-acetyl-alpha-D-muramoyl-L-alanyl-L-glutamate + ADP + phosphate + H(+). Its pathway is cell wall biogenesis; peptidoglycan biosynthesis. Cell wall formation. Catalyzes the addition of L-glutamate to the nucleotide precursor UDP-N-acetylmuramoyl-L-alanine. The polypeptide is UDP-N-acetylmuramoyl-L-alanine--L-glutamate ligase (Salinispora tropica (strain ATCC BAA-916 / DSM 44818 / JCM 13857 / NBRC 105044 / CNB-440)).